The primary structure comprises 327 residues: Elongation factor P--(R)-beta-lysine ligase (327 aa).

80-82 (SPE) lines the substrate pocket. ATP-binding positions include 104 to 106 (RNE) and N113. Residue Y122 coordinates substrate. 246–247 (EL) serves as a coordination point for ATP. E253 is a substrate binding site. G302 is a binding site for ATP.

This sequence belongs to the class-II aminoacyl-tRNA synthetase family. EpmA subfamily. In terms of assembly, homodimer.

The catalysed reaction is D-beta-lysine + L-lysyl-[protein] + ATP = N(6)-((3R)-3,6-diaminohexanoyl)-L-lysyl-[protein] + AMP + diphosphate + H(+). In terms of biological role, with EpmB is involved in the beta-lysylation step of the post-translational modification of translation elongation factor P (EF-P). Catalyzes the ATP-dependent activation of (R)-beta-lysine produced by EpmB, forming a lysyl-adenylate, from which the beta-lysyl moiety is then transferred to the epsilon-amino group of a conserved specific lysine residue in EF-P. This chain is Elongation factor P--(R)-beta-lysine ligase, found in Haemophilus ducreyi (strain 35000HP / ATCC 700724).